The chain runs to 204 residues: High frequency lysogenization protein HflD homolog (204 aa).

It belongs to the HflD family.

It localises to the cytoplasm. Its subcellular location is the cell inner membrane. This Aeromonas hydrophila subsp. hydrophila (strain ATCC 7966 / DSM 30187 / BCRC 13018 / CCUG 14551 / JCM 1027 / KCTC 2358 / NCIMB 9240 / NCTC 8049) protein is High frequency lysogenization protein HflD homolog.